The following is a 542-amino-acid chain: Putative cysteine ligase BshC (542 aa).

A coiled-coil region spans residues 458 to 487 (VAKNAAIIQAQIEFLQQTLERALLSKHEVE).

This sequence belongs to the BshC family.

Its function is as follows. Involved in bacillithiol (BSH) biosynthesis. May catalyze the last step of the pathway, the addition of cysteine to glucosamine malate (GlcN-Mal) to generate BSH. This Geobacillus thermodenitrificans (strain NG80-2) protein is Putative cysteine ligase BshC.